The following is a 194-amino-acid chain: FMN-dependent NADH:quinone oxidoreductase 1 (194 aa).

Residues Ser9 and Met85–Phe88 each bind FMN.

The protein belongs to the azoreductase type 1 family. In terms of assembly, homodimer. The cofactor is FMN.

The enzyme catalyses 2 a quinone + NADH + H(+) = 2 a 1,4-benzosemiquinone + NAD(+). The catalysed reaction is N,N-dimethyl-1,4-phenylenediamine + anthranilate + 2 NAD(+) = 2-(4-dimethylaminophenyl)diazenylbenzoate + 2 NADH + 2 H(+). In terms of biological role, quinone reductase that provides resistance to thiol-specific stress caused by electrophilic quinones. Also exhibits azoreductase activity. Catalyzes the reductive cleavage of the azo bond in aromatic azo compounds to the corresponding amines. This Xanthomonas euvesicatoria pv. vesicatoria (strain 85-10) (Xanthomonas campestris pv. vesicatoria) protein is FMN-dependent NADH:quinone oxidoreductase 1.